Here is a 707-residue protein sequence, read N- to C-terminus: Glucose starvation modulator protein 1 (707 aa).

Positions 20–48 form a DNA-binding region, zn(2)-C6 fungal-type; it reads CTFCHQKHLQCSNERPCKNCVKRNIADQC. 4 disordered regions span residues 63–122, 154–188, 260–283, and 385–404; these read NSKA…PNDL, QPTHTVASETSSSYSQVQPQHHPESSVPPSAPPES, DQQQSSSEATGTSASKAVPMGPSH, and NVSSRGNNNTSNQKLQSAIA. Composition is skewed to low complexity over residues 66-79 and 91-104; these read AVAAATTPEATTTT and SPSISFPSSSISPI. Composition is skewed to polar residues over residues 105 to 114 and 154 to 172; these read NTSTFDTNGH and QPTHTVASETSSSYSQVQP. Low complexity predominate over residues 178 to 188; that stretch reads SSVPPSAPPES. Residues 260 to 274 show a composition bias toward polar residues; that stretch reads DQQQSSSEATGTSAS. The region spanning 522-591 is the PAS domain; it reads DYEKLSQLNS…FQLFKSVAVG (70 aa). Residues 621–652 show a composition bias toward low complexity; sequence NYNNNYNHNYSHNNNNNNNSNNSNNNGMSTGA. A disordered region spans residues 621-659; the sequence is NYNNNYNHNYSHNNNNNNNSNNSNNNGMSTGAGNSGDGD.

The protein belongs to the ERT1/acuK family.

Its subcellular location is the nucleus. Its function is as follows. Transcription factor which regulates nonfermentable carbon utilization. This chain is Glucose starvation modulator protein 1 (GSM1), found in Lodderomyces elongisporus (strain ATCC 11503 / CBS 2605 / JCM 1781 / NBRC 1676 / NRRL YB-4239) (Yeast).